The chain runs to 219 residues: Leukocyte surface antigen CD53 (219 aa).

At 1 to 11 (MGMSSLKLLKY) the chain is on the cytoplasmic side. A helical transmembrane segment spans residues 12 to 32 (VLFFFNLLFWICGCCILGFGI). The Extracellular segment spans residues 33 to 54 (YLLIHNNFGVLFHNLPSLTLGN). Residues 55–69 (VFVIVGSIIMVVAFL) form a helical membrane-spanning segment. The Cytoplasmic segment spans residues 70–80 (GCMGSIKENKC). Residues 81-106 (LLMSFFILLLIILLAEVTLAILLFVY) traverse the membrane as a helical segment. The Extracellular portion of the chain corresponds to 107–181 (EQKLNEYVAK…AKARLWFHSN (75 aa)). Asparagine 129 and asparagine 148 each carry an N-linked (GlcNAc...) asparagine glycan. A helical transmembrane segment spans residues 182–206 (FLYIGIITICVCVIEVLGMSFALTL). The Cytoplasmic portion of the chain corresponds to 207–219 (NCQIDKTSQTIGL).

This sequence belongs to the tetraspanin (TM4SF) family. As to quaternary structure, interacts with SCIMP. Interacts with CD45/PTPRC. Interacts with IL7R. Interacts with RBL2 and PPP2CA. B-cells, monocytes, macrophages, neutrophils, single (CD4 or CD8) positive thymocytes and peripheral T-cells.

The protein resides in the cell membrane. Its subcellular location is the cell junction. It localises to the membrane. It is found in the synapse. Structural component of specialized membrane microdomains known as tetraspanin-enriched microdomains (TERMs), which act as platforms for receptor clustering and signaling. Participates thereby in diverse biological functions such as cell signal transduction, adhesion, migration and protein trafficking. Plays a role in the activation of monocytes and B-cells. Acts as an essential regulator of B-cell development by promoting interleukin-7 receptor/IL7R signaling. Also promotes, in B-cells, the BCR signaling by recruiting PKC to the plasma membrane in order to phosphorylate its substrates. Plays an essential role in B- and T-cells homing to lymph nodes by stabilizing L-selectin/SELL cell surface expression. Also mediates metabolic and inflammatory functions in hepatocytes and adipose tissue by promoting TNF-alpha and LPS signaling independent of the immune compartment. The chain is Leukocyte surface antigen CD53 (CD53) from Homo sapiens (Human).